Consider the following 186-residue polypeptide: MQGHRIGYVRVSSFDQNPERQLEQTQVSKVFTDKASGKDTQRPQLEALLSFVREGDTVVVHSMDRLARNLDDLRRLVQKLTQRGVRIEFLKEGLVFTGEDSPMANLMLSVMGAFAEFERALIRERQREGIALAKQRGAYRGRKKALSDEQAATLRQRATAGEPKAQLAREFNISRETLYQYLRTDD.

Residues 4 to 137 (HRIGYVRVSS…EGIALAKQRG (134 aa)) form the Resolvase/invertase-type recombinase catalytic domain. Serine 12 functions as the O-(5'-phospho-DNA)-serine intermediate in the catalytic mechanism. The segment at residues 164 to 183 (KAQLAREFNISRETLYQYLR) is a DNA-binding region (H-T-H motif).

It belongs to the site-specific recombinase resolvase family.

Resolvase catalyzes the resolution (a site-specific recombination) of the cointegrated replicon to yield the final transposition products. The protein is Transposons Tn1721 resolvase (tnpR) of Escherichia coli.